Reading from the N-terminus, the 552-residue chain is Chaperonin GroEL (552 aa).

ATP-binding positions include threonine 30 to proline 33, lysine 51, aspartate 87 to threonine 91, glycine 415, asparagine 480 to alanine 482, and aspartate 496.

This sequence belongs to the chaperonin (HSP60) family. As to quaternary structure, forms a cylinder of 14 subunits composed of two heptameric rings stacked back-to-back. Interacts with the co-chaperonin GroES.

It localises to the cytoplasm. The catalysed reaction is ATP + H2O + a folded polypeptide = ADP + phosphate + an unfolded polypeptide.. Functionally, together with its co-chaperonin GroES, plays an essential role in assisting protein folding. The GroEL-GroES system forms a nano-cage that allows encapsulation of the non-native substrate proteins and provides a physical environment optimized to promote and accelerate protein folding. This chain is Chaperonin GroEL, found in Coxiella burnetii (strain RSA 493 / Nine Mile phase I).